Here is a 774-residue protein sequence, read N- to C-terminus: Chondroitin sulfate synthase 2 (774 aa).

Residues 1–15 (MRASLLLSVLRPAGP) are Cytoplasmic-facing. Residues 16–34 (VAVGISLGFTLSLLSVTWV) form a helical; Signal-anchor for type II membrane protein membrane-spanning segment. Residues 35–774 (EEPCGPGPPQ…LFEQEQGNST (740 aa)) lie on the Lumenal side of the membrane. The interval 37–103 (PCGPGPPQPG…AQPGQATKKA (67 aa)) is disordered. Polar residues predominate over residues 54 to 67 (GNTNAARRPNSVQP). N-linked (GlcNAc...) asparagine glycosylation is found at asparagine 138 and asparagine 361. Aspartate 616 lines the a divalent metal cation pocket.

It belongs to the chondroitin N-acetylgalactosaminyltransferase family. In terms of assembly, interacts with PRKN. Mn(2+) is required as a cofactor. It depends on Co(2+) as a cofactor. In terms of tissue distribution, isoform 1, isoform 2 and isoform 3 are expressed in brain (at protein level).

It localises to the golgi apparatus. It is found in the golgi stack membrane. The protein resides in the cytoplasm. Its subcellular location is the cytosol. The protein localises to the mitochondrion. It localises to the mitochondrion matrix. It catalyses the reaction 3-O-(beta-D-GlcA-(1-&gt;3)-beta-D-GalNAc-(1-&gt;4)-beta-D-GlcA-(1-&gt;3)-beta-D-Gal-(1-&gt;3)-beta-D-Gal-(1-&gt;4)-beta-D-Xyl)-L-seryl-[protein] + UDP-N-acetyl-alpha-D-galactosamine = 3-O-(beta-D-GalNAc-(1-&gt;4)-beta-D-GlcA-(1-&gt;3)-beta-D-GalNAc-(1-&gt;4)-beta-D-GlcA-(1-&gt;3)-beta-D-Gal-(1-&gt;3)-beta-D-Gal-(1-&gt;4)-beta-D-Xyl)-L-seryl-[protein] + UDP + H(+). The enzyme catalyses 3-O-{beta-D-GlcA-(1-&gt;3)-[beta-D-GalNAc-(1-&gt;4)-beta-D-GlcA-(1-&gt;3)](n)-beta-D-GalNAc-(1-&gt;4)-beta-D-GlcA-(1-&gt;3)-beta-D-Gal-(1-&gt;3)-beta-D-Gal-(1-&gt;4)-beta-D-Xyl}-L-seryl-[protein] + UDP-N-acetyl-alpha-D-galactosamine = 3-O-{[beta-D-GalNAc-(1-&gt;4)-beta-D-GlcA-(1-&gt;3)](n+1)-beta-D-GalNAc-(1-&gt;4)-beta-D-GlcA-(1-&gt;3)-beta-D-Gal-(1-&gt;3)-beta-D-Gal-(1-&gt;4)-beta-D-Xyl}-L-seryl-[protein] + UDP + H(+). It carries out the reaction 3-O-(beta-D-GalNAc-(1-&gt;4)-beta-D-GlcA-(1-&gt;3)-beta-D-Gal-(1-&gt;3)-beta-D-Gal-(1-&gt;4)-beta-D-Xyl)-L-seryl-[protein] + UDP-alpha-D-glucuronate = 3-O-(beta-D-GlcA-(1-&gt;3)-beta-D-GalNAc-(1-&gt;4)-beta-D-GlcA-(1-&gt;3)-beta-D-Gal-(1-&gt;3)-beta-D-Gal-(1-&gt;4)-beta-D-Xyl)-L-seryl-[protein] + UDP + H(+). The catalysed reaction is 3-O-{[beta-D-GalNAc-(1-&gt;4)-beta-D-GlcA-(1-&gt;3)](n)-beta-D-GalNAc-(1-&gt;4)-beta-D-GlcA-(1-&gt;3)-beta-D-Gal-(1-&gt;3)-beta-D-Gal-(1-&gt;4)-beta-D-Xyl}-L-seryl-[protein] + UDP-alpha-D-glucuronate = 3-O-{beta-D-GlcA-(1-&gt;3)-[beta-D-GalNAc-(1-&gt;4)-beta-D-GlcA-(1-&gt;3)](n)-beta-D-GalNAc-(1-&gt;4)-beta-D-GlcA-(1-&gt;3)-beta-D-Gal-(1-&gt;3)-beta-D-Gal-(1-&gt;4)-beta-D-Xyl}-L-seryl-[protein] + UDP + H(+). In terms of biological role, has both beta-1,3-glucuronic acid and beta-1,4-N-acetylgalactosamine transferase activity. Transfers glucuronic acid (GlcUA) from UDP-GlcUA and N-acetylgalactosamine (GalNAc) from UDP-GalNAc to the non-reducing end of the elongating chondroitin polymer. Seems to act as a specific activating factor for CHSY1 in chondroitin polymerization. Its function is as follows. May facilitate PRKN transport into the mitochondria. In collaboration with PRKN, may enhance cell viability and protect cells from oxidative stress. In Mus musculus (Mouse), this protein is Chondroitin sulfate synthase 2.